The primary structure comprises 132 residues: Homeobox protein HD-4 (132 aa).

Positions 29 to 88 form a DNA-binding region, homeobox; that stretch reads GLSGYRYKTHIQVYVLTKIFEITQYPSHDTRQNLAILLNMSPRTIQIWFQNSRSVSRGAA. Positions 82 to 101 are disordered; that stretch reads SVSRGAAKKKVSKDNGPQEA.

The protein localises to the nucleus. The sequence is that of Homeobox protein HD-4 (HD-4) from Encephalitozoon cuniculi (strain GB-M1) (Microsporidian parasite).